The chain runs to 398 residues: 4-hydroxy-3-methylbut-2-en-1-yl diphosphate synthase (ferredoxin) (398 aa).

Residues cysteine 306, cysteine 309, cysteine 340, and glutamate 347 each coordinate [4Fe-4S] cluster.

The protein belongs to the IspG family. Requires [4Fe-4S] cluster as cofactor.

The enzyme catalyses (2E)-4-hydroxy-3-methylbut-2-enyl diphosphate + 2 oxidized [2Fe-2S]-[ferredoxin] + H2O = 2-C-methyl-D-erythritol 2,4-cyclic diphosphate + 2 reduced [2Fe-2S]-[ferredoxin] + H(+). It participates in isoprenoid biosynthesis; isopentenyl diphosphate biosynthesis via DXP pathway; isopentenyl diphosphate from 1-deoxy-D-xylulose 5-phosphate: step 5/6. Its function is as follows. Converts 2C-methyl-D-erythritol 2,4-cyclodiphosphate (ME-2,4cPP) into 1-hydroxy-2-methyl-2-(E)-butenyl 4-diphosphate. This is 4-hydroxy-3-methylbut-2-en-1-yl diphosphate synthase (ferredoxin) from Synechococcus sp. (strain CC9311).